Reading from the N-terminus, the 195-residue chain is MTKIIGLTGGIASGKSTVTKIIRESGFKVIDADQVVHKLQAKGGKLYQALLEWLGPEILDADGELDRPKLSQMIFANPDNMKTSARLQNSIIRQELACQRDQLKQTEEIFFVDIPLLIEEKYIKWFDEIWLVFVDKEKQLQRLMARNNYSREEAELRLSHQMPLTDKKSFASLIINNNGDLITLKEQILDALQRL.

A DPCK domain is found at 4–195 (IIGLTGGIAS…EQILDALQRL (192 aa)). Position 12-17 (12-17 (ASGKST)) interacts with ATP.

The protein belongs to the CoaE family.

It localises to the cytoplasm. It catalyses the reaction 3'-dephospho-CoA + ATP = ADP + CoA + H(+). It participates in cofactor biosynthesis; coenzyme A biosynthesis; CoA from (R)-pantothenate: step 5/5. In terms of biological role, catalyzes the phosphorylation of the 3'-hydroxyl group of dephosphocoenzyme A to form coenzyme A. This chain is Dephospho-CoA kinase, found in Streptococcus agalactiae serotype III (strain NEM316).